A 341-amino-acid chain; its full sequence is Cathepsin B-like cysteine proteinase 1 (341 aa).

The signal sequence occupies residues M1–A19. Positions E20–N88 are cleaved as a propeptide — activation peptide. Residue N103 is glycosylated (N-linked (GlcNAc...) asparagine). 6 disulfide bridges follow: C104–C133, C116–C160, C152–C218, C153–C156, C189–C222, and C197–C209. C119 is a catalytic residue. N-linked (GlcNAc...) asparagine glycosylation is present at N202. Residues H288 and N308 contribute to the active site.

It belongs to the peptidase C1 family.

Its function is as follows. Expression of the protease correlates with blood-feeding and suggests a role for the protease in blood digestion. The polypeptide is Cathepsin B-like cysteine proteinase 1 (CP-1) (Ostertagia ostertagi (Brown stomach worm)).